We begin with the raw amino-acid sequence, 310 residues long: HPr kinase/phosphorylase (310 aa).

Residues H138 and K159 contribute to the active site. Position 153–160 (153–160) interacts with ATP; that stretch reads GKSGVGKS. S160 serves as a coordination point for Mg(2+). D177 acts as the Proton acceptor; for phosphorylation activity. Proton donor; for dephosphorylation activity in catalysis. The important for the catalytic mechanism of both phosphorylation and dephosphorylation stretch occupies residues 201–210; the sequence is LEIRGLGIIN. A Mg(2+)-binding site is contributed by E202. Residue R243 is part of the active site. Residues 264–269 are important for the catalytic mechanism of dephosphorylation; the sequence is PVRPGR.

This sequence belongs to the HPrK/P family. In terms of assembly, homohexamer. Mg(2+) serves as cofactor.

It carries out the reaction [HPr protein]-L-serine + ATP = [HPr protein]-O-phospho-L-serine + ADP + H(+). The enzyme catalyses [HPr protein]-O-phospho-L-serine + phosphate + H(+) = [HPr protein]-L-serine + diphosphate. In terms of biological role, catalyzes the ATP- as well as the pyrophosphate-dependent phosphorylation of a specific serine residue in HPr, a phosphocarrier protein of the phosphoenolpyruvate-dependent sugar phosphotransferase system (PTS). HprK/P also catalyzes the pyrophosphate-producing, inorganic phosphate-dependent dephosphorylation (phosphorolysis) of seryl-phosphorylated HPr (P-Ser-HPr). The two antagonistic activities of HprK/P are regulated by several intracellular metabolites, which change their concentration in response to the absence or presence of rapidly metabolisable carbon sources (glucose, fructose, etc.) in the growth medium. Also phosphorylates/dephosphorylates the HPr-like catabolite repression protein crh on a specific serine residue. Therefore, by controlling the phosphorylation state of HPr and crh, HPrK/P is a sensor enzyme that plays a major role in the regulation of carbon metabolism and sugar transport: it mediates carbon catabolite repression (CCR), and regulates PTS-catalyzed carbohydrate uptake and inducer exclusion. The polypeptide is HPr kinase/phosphorylase (Bacillus velezensis (strain DSM 23117 / BGSC 10A6 / LMG 26770 / FZB42) (Bacillus amyloliquefaciens subsp. plantarum)).